The following is a 214-amino-acid chain: Adenylate kinase (214 aa).

10-15 provides a ligand contact to ATP; the sequence is GAGKGT. Positions 30–59 are NMP; sequence STGDMLRAAVKAGTPLGLEAKKVMDAGQLV. Residues Thr31, Arg36, 57 to 59, 85 to 88, and Gln92 each bind AMP; these read QLV and GFPR. The segment at 122–159 is LID; it reads GRRVHPGSGRVYHIVFNQPKVEGKDDVTGEDLAIRPDD. ATP is bound by residues Arg123 and 132–133; that span reads VY. 2 residues coordinate AMP: Arg156 and Arg167. Gln200 contributes to the ATP binding site.

It belongs to the adenylate kinase family. As to quaternary structure, monomer.

The protein resides in the cytoplasm. It carries out the reaction AMP + ATP = 2 ADP. Its pathway is purine metabolism; AMP biosynthesis via salvage pathway; AMP from ADP: step 1/1. Functionally, catalyzes the reversible transfer of the terminal phosphate group between ATP and AMP. Plays an important role in cellular energy homeostasis and in adenine nucleotide metabolism. The protein is Adenylate kinase of Shewanella piezotolerans (strain WP3 / JCM 13877).